A 543-amino-acid chain; its full sequence is Limonene hydroxylase (543 aa).

In terms of domain architecture, Sigma-54 factor interaction spans 232–464; it reads VVTYNPSFEK…LRNVIERAFL (233 aa). ATP contacts are provided by residues 260–267 and 324–333; these read GETGSGKE and ADGGTLFLDE.

The enzyme catalyses (4S)-limonene + reduced [NADPH--hemoprotein reductase] + O2 = (1S,5R)-carveol + oxidized [NADPH--hemoprotein reductase] + H2O + H(+). It carries out the reaction (4S)-limonene + reduced [NADPH--hemoprotein reductase] + O2 = (4S)-perillyl alcohol + oxidized [NADPH--hemoprotein reductase] + H2O + H(+). The catalysed reaction is perillyl alcohol + NAD(+) = perillyl aldehyde + NADH + H(+). It catalyses the reaction (1S,5R)-carveol + NADP(+) = (R)-carvone + NADPH + H(+). Involved in limonene hydroxylation to a mixture of carveol and perillyl alcohol as well as in dehydrogenation of these products to carvone and perillyl aldehyde. Aromatic alcohols containing an isopropyl or isopropenyl group at ring position 4 also served as substrates for the dehydrogenase activity. The protein is Limonene hydroxylase of Geobacillus stearothermophilus (Bacillus stearothermophilus).